Consider the following 379-residue polypeptide: ATP phosphoribosyltransferase regulatory subunit (379 aa).

The protein belongs to the class-II aminoacyl-tRNA synthetase family. HisZ subfamily. Heteromultimer composed of HisG and HisZ subunits.

It localises to the cytoplasm. Its pathway is amino-acid biosynthesis; L-histidine biosynthesis; L-histidine from 5-phospho-alpha-D-ribose 1-diphosphate: step 1/9. Functionally, required for the first step of histidine biosynthesis. May allow the feedback regulation of ATP phosphoribosyltransferase activity by histidine. The polypeptide is ATP phosphoribosyltransferase regulatory subunit (Paramagnetospirillum magneticum (strain ATCC 700264 / AMB-1) (Magnetospirillum magneticum)).